Consider the following 563-residue polypeptide: Nicalin (563 aa).

Residues 1–29 form the signal peptide; that stretch reads MQDEIIDFFRSPALLFYMTLMLTICVVNG. The Lumenal segment spans residues 30-522; sequence SQQVGEVVET…NRLVAERVKP (493 aa). The N-linked (GlcNAc...) asparagine glycan is linked to asparagine 232. Residues 523 to 543 form a helical membrane-spanning segment; that stretch reads AVFELVIAAGVFTYLSAFYYI. Over 544–563 the chain is Cytoplasmic; it reads ATHSQNTIEGTVAAIRKSIF.

Belongs to the nicastrin family. In terms of assembly, may interact with the levamisole-sensitive nicotinic acetylcholine receptor (L-AChR). May interact with nra-4 in the ER. As to expression, expressed in body wall, pharyngeal, and vulval muscles, excretory canal cell, head and motor neurons, and vulval epithelium.

It is found in the endoplasmic reticulum membrane. Involved in the recognition and selection of protein complexes to exit the endoplasmic reticulum (ER). In muscles, regulates levamisole-sensitive nicotinic acetylcholine receptor (L-AChR) subunit composition, possibly by allowing only specific L-AChR subunit combinations to exit the ER. Specifically, may promote the inclusion of alpha subunits unc-38 and unc-29 into L-AChR. Regulates L-AChR sensitivity to agonists such as nicotine and levamisole at neuro-muscular junctions. In touch neurons, may prevent ER exit of incorrectly folded mec-4-mec-10 ion channel. In Caenorhabditis elegans, this protein is Nicalin.